Here is a 117-residue protein sequence, read N- to C-terminus: MIEQHPKQGKIQTRNYAGPWRKTPGRLLGTGLIRLYQITLSNFIGNQCRYMPTCSEYTYEAIARHGLWAGAWMGLFRIVCCNPFGTHGFDPVPTSLGSSYYFYKPWCYRKISTKHNK.

The protein belongs to the UPF0161 family.

It is found in the cell inner membrane. Functionally, could be involved in insertion of integral membrane proteins into the membrane. This Bartonella bacilliformis (strain ATCC 35685 / KC583 / Herrer 020/F12,63) protein is Putative membrane protein insertion efficiency factor.